The sequence spans 165 residues: Transcription elongation factor A protein-like 1 (165 aa).

Positions 1–101 are disordered; it reads MENTRSENEE…EQPPCGVGKH (101 aa). Residues 33 to 60 are compositionally biased toward acidic residues; that stretch reads CSEEDQSSEDLSSEEQSSEEEFFPEELL.

It belongs to the TFS-II family. TFA subfamily.

The protein localises to the nucleus. Functionally, may be involved in transcriptional regulation. Modulates various viral and cellular promoters in a promoter context-dependent manner. Does not bind DNA directly. This chain is Transcription elongation factor A protein-like 1, found in Mus musculus (Mouse).